The primary structure comprises 1551 residues: Dual oxidase 1 (1551 aa).

Residues 1–21 (MGFCLALAWTLLVGAWTPLGA) form the signal peptide. Topologically, residues 22–596 (QNPISWEVQR…YFEGSGFGFG (575 aa)) are extracellular. The segment at 26–593 (SWEVQRFDGW…VRDYFEGSGF (568 aa)) is peroxidase-like; mediates peroxidase activity. Asparagine 94 carries N-linked (GlcNAc...) asparagine glycosylation. Residues 150-172 (RWDPETGRSPSNPRDPANQVTGW) are disordered. N-linked (GlcNAc...) asparagine glycosylation is found at asparagine 342, asparagine 354, asparagine 461, and asparagine 534. Residues 597 to 617 (VTIGTLCCFPLVSLLSAWIVA) traverse the membrane as a helical segment. Residues 618–1044 (RLRMRNFKRL…KRFIENYRRH (427 aa)) lie on the Cytoplasmic side of the membrane. EF-hand domains are found at residues 815 to 850 (PQDM…FMKG), 851 to 886 (SPEE…FIEI), and 895 to 930 (QLAE…HNSE). 9 residues coordinate Ca(2+): aspartate 828, aspartate 830, asparagine 832, tyrosine 834, glutamate 839, aspartate 864, aspartate 866, asparagine 868, and glutamate 875. Positions 956 to 1248 (YISQDMICPS…GSFALIQLPR (293 aa)) are interaction with TXNDC11. A helical membrane pass occupies residues 1045–1065 (IGCVAVFYAIAGGLFLERAYY). At 1066–1080 (YAFAAHHTGITDTTR) the chain is on the extracellular side. Residues 1081–1101 (VGIILSRGTAASISFMFSYIL) traverse the membrane as a helical segment. One can recognise a Ferric oxidoreductase domain in the interval 1087–1269 (RGTAASISFM…YGGDKLVSLS (183 aa)). At 1102–1148 (LTMCRNLITFLRETFLNRYVPFDAAVDFHRLIASTAIVLTVLHSVGH) the chain is on the cytoplasmic side. A helical transmembrane segment spans residues 1149–1171 (VVNVYLFSISPLSVLSCLFPGLF). Over 1172-1188 (HDDGSELPQKYYWWFFQ) the chain is Extracellular. A helical membrane pass occupies residues 1189 to 1209 (TVPGLTGVVLLLILAIMYVFA). Residues 1210-1226 (SHHFRRRSFRGFWLTHH) are Cytoplasmic-facing. The chain crosses the membrane as a helical span at residues 1227-1247 (LYILLYVLLIIHGSFALIQLP). Position 1248 (arginine 1248) is a topological domain, extracellular. The helical transmembrane segment at 1249 to 1269 (FHIFFLVPAIIYGGDKLVSLS) threads the bilayer. In terms of domain architecture, FAD-binding FR-type spans 1270 to 1376 (RKKVEISVVK…DGPFGEGHQE (107 aa)). Over 1270–1551 (RKKVEISVVK…THFSHHYENF (282 aa)) the chain is Cytoplasmic.

It in the N-terminal section; belongs to the peroxidase family. Interacts with TXNDC11, TPO and CYBA. N-glycosylated. In terms of tissue distribution, expressed in thyrocytes and tracheal surface epithelial cells (at protein level). Expressed in thyroid, trachea, bronchium, and to a lower extent, in placenta, testis, prostate, pancreas and heart.

The protein resides in the apical cell membrane. The enzyme catalyses NADH + O2 + H(+) = H2O2 + NAD(+). The catalysed reaction is NADPH + O2 + H(+) = H2O2 + NADP(+). Its pathway is hormone biosynthesis; thyroid hormone biosynthesis. The NADPH oxidase activity is calcium-dependent. Peroxidase activity is inhibited by aminobenzohydrazide. In terms of biological role, generates hydrogen peroxide which is required for the activity of thyroid peroxidase/TPO and lactoperoxidase/LPO. Plays a role in thyroid hormones synthesis and lactoperoxidase-mediated antimicrobial defense at the surface of mucosa. May have its own peroxidase activity through its N-terminal peroxidase-like domain. The protein is Dual oxidase 1 (DUOX1) of Homo sapiens (Human).